Reading from the N-terminus, the 59-residue chain is Small ribosomal subunit protein bS21 (59 aa).

The tract at residues 35 to 59 (REHYEKPSVKKKKKSEAAKRKKRNF) is disordered. Residues 43–59 (VKKKKKSEAAKRKKRNF) show a composition bias toward basic residues.

It belongs to the bacterial ribosomal protein bS21 family.

In Finegoldia magna (strain ATCC 29328 / DSM 20472 / WAL 2508) (Peptostreptococcus magnus), this protein is Small ribosomal subunit protein bS21.